A 729-amino-acid chain; its full sequence is Beta-galactosidase 4 (729 aa).

The signal sequence occupies residues 1–35; the sequence is MAPAPTPAAAAGRRVAVLAAALVAASLAASVGVAN. Catalysis depends on Glu-194, which acts as the Proton donor. Catalysis depends on Glu-263, which acts as the Nucleophile.

It belongs to the glycosyl hydrolase 35 family.

Its subcellular location is the secreted. The protein localises to the extracellular space. The protein resides in the apoplast. It catalyses the reaction Hydrolysis of terminal non-reducing beta-D-galactose residues in beta-D-galactosides.. This Oryza sativa subsp. japonica (Rice) protein is Beta-galactosidase 4.